A 133-amino-acid polypeptide reads, in one-letter code: Small ribosomal subunit protein uS9 (133 aa).

A disordered region spans residues 101-133 (MKPKGLLTRDPREVERKKYGLKKARRAPQFSKR). Residues 107–118 (LTRDPREVERKK) are compositionally biased toward basic and acidic residues. A compositionally biased stretch (basic residues) spans 119–133 (YGLKKARRAPQFSKR).

The protein belongs to the universal ribosomal protein uS9 family.

In Deinococcus radiodurans (strain ATCC 13939 / DSM 20539 / JCM 16871 / CCUG 27074 / LMG 4051 / NBRC 15346 / NCIMB 9279 / VKM B-1422 / R1), this protein is Small ribosomal subunit protein uS9.